Consider the following 356-residue polypeptide: Protein pelota homolog (356 aa).

Belongs to the eukaryotic release factor 1 family. Pelota subfamily. As to quaternary structure, monomer. The cofactor is a divalent metal cation.

It is found in the cytoplasm. May function in recognizing stalled ribosomes, interact with stem-loop structures in stalled mRNA molecules, and effect endonucleolytic cleavage of the mRNA. May play a role in the release non-functional ribosomes and degradation of damaged mRNAs. Has endoribonuclease activity. The sequence is that of Protein pelota homolog from Pyrococcus abyssi (strain GE5 / Orsay).